Reading from the N-terminus, the 220-residue chain is Iron-sulfur cluster repair protein YtfE (220 aa).

The protein belongs to the RIC family. YtfE subfamily. Homodimer.

It is found in the cytoplasm. Its function is as follows. Di-iron-containing protein involved in the repair of iron-sulfur clusters damaged by oxidative and nitrosative stress conditions. The protein is Iron-sulfur cluster repair protein YtfE of Salmonella paratyphi A (strain AKU_12601).